A 296-amino-acid polypeptide reads, in one-letter code: Light-inducible protein CPRF3 (296 aa).

Disordered regions lie at residues 1–27 (MSDGEEGTPMKHPKPASSVEEAPITTT), 98–165 (PNLA…GSLE), and 190–223 (RVNDERELKRQRRKQSNRESARRSRLRKQAKSDE). A compositionally biased stretch (basic and acidic residues) spans 107-117 (VGRKISDEKGR). Over residues 145-156 (SSSDNDCPSLSS) the composition is skewed to low complexity. One can recognise a bZIP domain in the interval 196–259 (ELKRQRRKQS…AEVTSENHSI (64 aa)). Residues 198–220 (KRQRRKQSNRESARRSRLRKQAK) form a basic motif region. The tract at residues 224–245 (LQERLDNLSKENRILRKNLQRI) is leucine-zipper.

Belongs to the bZIP family. As to quaternary structure, binds DNA as a dimer.

The protein localises to the nucleus. In terms of biological role, binds to the G-box-like motif (5'-ACGTGGC-3') of the chalcone synthase (CHS) gene promoter. G-box and G-box-like motifs are defined in promoters of certain plant genes which are regulated by such diverse stimuli as light-induction or hormone control. The polypeptide is Light-inducible protein CPRF3 (CPRF3) (Petroselinum crispum (Parsley)).